Consider the following 378-residue polypeptide: Anhydro-N-acetylmuramic acid kinase (378 aa).

9 to 16 (GTSVDGID) is a binding site for ATP.

It belongs to the anhydro-N-acetylmuramic acid kinase family.

It catalyses the reaction 1,6-anhydro-N-acetyl-beta-muramate + ATP + H2O = N-acetyl-D-muramate 6-phosphate + ADP + H(+). It functions in the pathway amino-sugar metabolism; 1,6-anhydro-N-acetylmuramate degradation. The protein operates within cell wall biogenesis; peptidoglycan recycling. Its function is as follows. Catalyzes the specific phosphorylation of 1,6-anhydro-N-acetylmuramic acid (anhMurNAc) with the simultaneous cleavage of the 1,6-anhydro ring, generating MurNAc-6-P. Is required for the utilization of anhMurNAc either imported from the medium or derived from its own cell wall murein, and thus plays a role in cell wall recycling. This Microcystis aeruginosa (strain NIES-843 / IAM M-2473) protein is Anhydro-N-acetylmuramic acid kinase.